We begin with the raw amino-acid sequence, 213 residues long: Uridine kinase (213 aa).

13 to 20 lines the ATP pocket; sequence GASASGKS.

Belongs to the uridine kinase family.

It localises to the cytoplasm. The catalysed reaction is uridine + ATP = UMP + ADP + H(+). The enzyme catalyses cytidine + ATP = CMP + ADP + H(+). Its pathway is pyrimidine metabolism; CTP biosynthesis via salvage pathway; CTP from cytidine: step 1/3. It functions in the pathway pyrimidine metabolism; UMP biosynthesis via salvage pathway; UMP from uridine: step 1/1. This chain is Uridine kinase, found in Haemophilus influenzae (strain PittGG).